The primary structure comprises 597 residues: Sodium/mannose cotransporter SLC5A10 (597 aa).

Residues Met1–Gln16 lie on the Extracellular side of the membrane. Asn5 carries N-linked (GlcNAc...) asparagine glycosylation. Residues Leu17–Ile37 form a helical membrane-spanning segment. Over Trp38 to Gly73 the chain is Cytoplasmic. Ser49 carries the phosphoserine modification. A helical membrane pass occupies residues Ser74–Phe94. Topologically, residues Asp95–Tyr100 are extracellular. The helical transmembrane segment at Val101–Leu121 threads the bilayer. Residues Ala122 to Tyr137 are Cytoplasmic-facing. A helical transmembrane segment spans residues Leu138–Gly158. The Extracellular portion of the chain corresponds to Ala159–Tyr171. A helical membrane pass occupies residues Leu172–Ile194. Residues Tyr195–Gln200 are Cytoplasmic-facing. A helical transmembrane segment spans residues Thr201 to Ile219. Residues Asp220 to Thr265 lie on the Extracellular side of the membrane. The chain crosses the membrane as a helical span at residues Gly266–Val286. Over Gln287 to Gly301 the chain is Cytoplasmic. The chain crosses the membrane as a helical span at residues Ser302–Ile322. Topologically, residues Ser323–Arg367 are extracellular. A helical transmembrane segment spans residues Gly368 to Ser390. The Cytoplasmic segment spans residues Thr391–Leu410. The chain crosses the membrane as a helical span at residues Leu411–Val431. Over Leu432–Met444 the chain is Extracellular. Residues Gln445 to Trp465 traverse the membrane as a helical segment. Topologically, residues Gln466–Gly472 are cytoplasmic. The chain crosses the membrane as a helical span at residues Ala473–Leu493. Residues His494–Tyr514 are Extracellular-facing. The chain crosses the membrane as a helical span at residues Leu515 to Leu535. The Cytoplasmic portion of the chain corresponds to Thr536–Arg576. Residues Val577–Ala597 traverse the membrane as a helical segment.

This sequence belongs to the sodium:solute symporter (SSF) (TC 2.A.21) family. Expressed only in kidney.

It localises to the apical cell membrane. The catalysed reaction is D-mannose(out) + Na(+)(out) = D-mannose(in) + Na(+)(in). It catalyses the reaction D-fructopyranose(out) + Na(+)(out) = D-fructopyranose(in) + Na(+)(in). Functionally, electrogenic Na+-coupled sugar symporter that actively transports D-mannose or D-fructose at the plasma membrane, with a Na+ to sugar coupling ratio of 1:1. Transporter activity is driven by a transmembrane Na+ electrochemical gradient set by the Na+/K+ pump. Exclusively recognizes sugar substrates having a pyranose ring with an axial hydroxyl group on carbon 2. Has likely evolved to enable renal reabsorption of D-mannose, an important constituent of oligosaccharide chains of glycoproteins. Contributes to dietary D-fructose reabsorption from glomerular filtrate across the brush border of the kidney. This Oryctolagus cuniculus (Rabbit) protein is Sodium/mannose cotransporter SLC5A10 (SLC5A10).